Consider the following 395-residue polypeptide: Calsequestrin-1 (395 aa).

The N-terminal stretch at 1–28 (MNAADRMGARVALLLLLVLGSPQSGVHG) is a signal peptide. Tyr37 is subject to Phosphotyrosine. The residue at position 75 (Ser75) is a Phosphoserine. Thr118 is subject to Phosphothreonine. A Phosphoserine modification is found at Ser210. N-linked (GlcNAc...) asparagine glycosylation is present at Asn344. The tract at residues 376-395 (EGEINTEDDDDEDDDDDDDD) is disordered.

It belongs to the calsequestrin family. As to quaternary structure, monomer; increases in response to a depletion of intracellular calcium. Homodimer. Homotetramer and homopolymer. Can form linear homooligomers. Ca(2+) ions promote oligomerization. Interacts (via C-terminal end and preferentially with the monomeric form) with STIM1; this interaction increases in response to a depletion of intracellular calcium, decreases both STIM1 aggregation and clustering, interaction of STIM1 with ORAI1 and store-operated Ca(2+) entry (SOCE) activity. Interacts with ASPH and TRDN. In terms of processing, N-glycosylated. Detected in skeletal muscle (at protein level). Detected in skeletal muscle.

Its subcellular location is the endoplasmic reticulum. The protein localises to the sarcoplasmic reticulum. It is found in the sarcoplasmic reticulum lumen. The protein resides in the mitochondrion matrix. It localises to the sarcoplasmic reticulum membrane. Its function is as follows. Calsequestrin is a high-capacity, moderate affinity, calcium-binding protein and thus acts as an internal calcium store in muscle. Calcium ions are bound by clusters of acidic residues at the protein surface, often at the interface between subunits. Can bind around 80 Ca(2+) ions. Regulates the release of lumenal Ca(2+) via the calcium release channel RYR1; this plays an important role in triggering muscle contraction. Negatively regulates store-operated Ca(2+) entry (SOCE) activity. This chain is Calsequestrin-1 (CASQ1), found in Oryctolagus cuniculus (Rabbit).